Reading from the N-terminus, the 461-residue chain is Cysteine--tRNA ligase (461 aa).

A Zn(2+)-binding site is contributed by Cys-28. Positions 30–40 (ITIYDLCHIGH) match the 'HIGH' region motif. Cys-209, His-234, and Glu-238 together coordinate Zn(2+). The 'KMSKS' region signature appears at 266-270 (KMSKS). Lys-269 contacts ATP.

This sequence belongs to the class-I aminoacyl-tRNA synthetase family. As to quaternary structure, monomer. The cofactor is Zn(2+).

The protein resides in the cytoplasm. It catalyses the reaction tRNA(Cys) + L-cysteine + ATP = L-cysteinyl-tRNA(Cys) + AMP + diphosphate. The polypeptide is Cysteine--tRNA ligase (Yersinia enterocolitica serotype O:8 / biotype 1B (strain NCTC 13174 / 8081)).